The primary structure comprises 2590 residues: DNA polymerase theta (2590 aa).

Over residues M1–R12 the composition is skewed to basic residues. The interval M1–F33 is disordered. The span at G16 to S30 shows a compositional bias: low complexity. Residues Q96 and A115 to T122 contribute to the ATP site. One can recognise a Helicase ATP-binding domain in the interval L102–D286. The tract at residues L102 to A554 is helicase activity. The DEAH box signature appears at D216–H219. The region spanning G321–A554 is the Helicase C-terminal domain. Residues D847 to M894 form an interaction with RAD51 region. An N6-acetyllysine modification is found at K990. Residues K1034–S1060 form a disordered region. The segment covering R1040–R1050 has biased composition (basic residues). A phosphoserine; by PLK1 mark is found at S1289, S1482, S1486, S1488, S1493, S1555, and S1563. The segment at S1594–G1622 is disordered. The span at L1598–K1619 shows a compositional bias: basic and acidic residues. S1628 and S1635 each carry phosphoserine; by PLK1. T1755 is subject to Phosphothreonine; by PLK1. Positions P1777–S1797 are disordered. The interval A2097–E2584 is DNA polymerase activity. Loop stretches follow at residues K2142–F2177 and E2257–P2322. D2330 and Y2331 together coordinate Mg(2+). Positions Q2491–I2535 are loop 3. A Mg(2+)-binding site is contributed by D2540.

The protein belongs to the DNA polymerase type-A family. In terms of assembly, homomultimer; forms homodimers and homotetramers. Interacts with RAD51. Interacts with ORC2 and ORC4. Interacts with RHNO1; interaction takes place during mitosis and promotes POLQ recruitment to DNA damage sites. Interacts (when phosphorylated) with TOPBP1 (via BRCT domains 7 and 8); promoting POLQ recruitment to DNA damage sites. The cofactor is Mg(2+). In terms of processing, phosphorylated by PLK1; promoting interaction with TOPBP1 and recruitment to DNA damage sites. In terms of tissue distribution, highly expressed in testis.

It localises to the nucleus. It is found in the chromosome. The catalysed reaction is DNA(n) + a 2'-deoxyribonucleoside 5'-triphosphate = DNA(n+1) + diphosphate. The enzyme catalyses ATP + H2O = ADP + phosphate + H(+). Its activity is regulated as follows. Specifically inhibited by the antibiotic novobiocin. The polymerase activity is specifically inhibited by the small molecule ART558. Novobiocin and ART558 confer specific killing of BRCA1/2-deficient cells and synergize with the poly [ADP-ribose] polymerase (PARP) inhibitor olaparib. Its function is as follows. Low-fidelity DNA polymerase with a helicase activity that promotes microhomology-mediated end-joining (MMEJ), an alternative non-homologous end-joining (NHEJ) machinery required to repair double-strand breaks in DNA during mitosis. MMEJ is an error-prone repair pathway that produces deletions of sequences from the strand being repaired and promotes genomic rearrangements, such as telomere fusions, some of them leading to cellular transformation. MMEJ is required during mitosis to repair persistent double-strand breaks that originate in S-phase. Although error-prone, MMEJ protects against chromosomal instability and tumorigenesis. The polymerase acts by binding directly the 2 ends of resected double-strand breaks, allowing microhomologous sequences in the overhangs to form base pairs. It then extends each strand from the base-paired region using the opposing overhang as a template. Requires partially resected DNA containing 2 to 6 base pairs of microhomology to perform MMEJ. The polymerase lacks proofreading activity and is highly promiscuous: unlike most polymerases, promotes extension of ssDNA and partial ssDNA (pssDNA) substrates. When the ends of a break do not contain terminal microhomology must identify embedded complementary sequences through a scanning step. Also acts as a DNA helicase, promoting dissociation of the replication protein A complex (RPA/RP-A), composed of RPA1, RPA2 and RPA3, from resected double-strand breaks to allow their annealing and subsequent joining by MMEJ. Removal of RPA/RP-A complex proteins prevents RAD51 accumulation at resected ends, thereby inhibiting homology-recombination repair (HR) pathway. Also shows RNA-directed DNA polymerase activity to mediate DNA repair in vitro; however this activity needs additional evidence in vivo. May also have lyase activity. Involved in somatic hypermutation of immunoglobulin genes, a process that requires the activity of DNA polymerases to ultimately introduce mutations at both A/T and C/G base pairs. POLQ-mediated end joining activity is involved in random integration of exogenous DNA hampers. In Homo sapiens (Human), this protein is DNA polymerase theta.